Reading from the N-terminus, the 757-residue chain is 5-methyltetrahydropteroyltriglutamate--homocysteine methyltransferase (757 aa).

5-methyltetrahydropteroyltri-L-glutamate is bound by residues 17 to 20 (RELK) and Lys-117. Residues 434 to 436 (IGS) and Glu-487 each bind L-homocysteine. Residues 434–436 (IGS) and Glu-487 contribute to the L-methionine site. 5-methyltetrahydropteroyltri-L-glutamate-binding positions include 518–519 (RC) and Trp-564. Asp-602 is a binding site for L-homocysteine. Position 602 (Asp-602) interacts with L-methionine. Glu-608 is a 5-methyltetrahydropteroyltri-L-glutamate binding site. Positions 644, 646, and 668 each coordinate Zn(2+). The active-site Proton donor is His-697. Residue Cys-729 coordinates Zn(2+).

The protein belongs to the vitamin-B12 independent methionine synthase family. Requires Zn(2+) as cofactor.

The catalysed reaction is 5-methyltetrahydropteroyltri-L-glutamate + L-homocysteine = tetrahydropteroyltri-L-glutamate + L-methionine. The protein operates within amino-acid biosynthesis; L-methionine biosynthesis via de novo pathway; L-methionine from L-homocysteine (MetE route): step 1/1. Functionally, catalyzes the transfer of a methyl group from 5-methyltetrahydrofolate to homocysteine resulting in methionine formation. The chain is 5-methyltetrahydropteroyltriglutamate--homocysteine methyltransferase from Proteus mirabilis (strain HI4320).